The sequence spans 248 residues: Transcription factor cicD (248 aa).

The segment covering 1-22 has biased composition (basic and acidic residues); that stretch reads MVGSRHPDQCAKRWHHSLDPNV. Positions 1-25 are disordered; that stretch reads MVGSRHPDQCAKRWHHSLDPNVKRG. In terms of domain architecture, HTH myb-type spans 19–74; that stretch reads DPNVKRGPWTMEEDSSLLEAVQKIGRDWKEIGRELFPSRSTTDIKNRYVILSRRRG. The segment at residues 46 to 70 is a DNA-binding region (H-T-H motif); it reads WKEIGRELFPSRSTTDIKNRYVILS. The interval 186–208 is disordered; that stretch reads SELEGSFTSRNHEEPPQPLPVPD.

The protein localises to the nucleus. In terms of biological role, transcription factor that regulates the expression of the gene cluster that mediates the biosynthesis of cichorine, a phytotoxin active against knapweed, corn, and soybeans. This is Transcription factor cicD from Emericella nidulans (strain FGSC A4 / ATCC 38163 / CBS 112.46 / NRRL 194 / M139) (Aspergillus nidulans).